A 201-amino-acid chain; its full sequence is Nascent polypeptide-associated complex subunit alpha (201 aa).

Residues 1–20 show a composition bias toward basic and acidic residues; the sequence is MANPRVEELPDEEVKKTVVD. 2 disordered regions span residues 1-51 and 118-165; these read MANP…SRNE and AQQL…IEDK. The segment covering 21-36 has biased composition (acidic residues); it reads DHDDDSSSDSDGEEET. In terms of domain architecture, NAC-A/B spans 48-113; sequence SRNEKKARKA…AKIEDLNASA (66 aa). The span at 126–149 shows a compositional bias: basic and acidic residues; sequence GHDHDHAGHSHGEAKASEGDAKKE. Over residues 150–161 the composition is skewed to acidic residues; that stretch reads EEDDDEEVDADG. In terms of domain architecture, UBA spans 162 to 200; it reads IEDKDIELVMTQAGVSRTKAIKALKENDNDIVNSIMALS.

The protein belongs to the NAC-alpha family. As to quaternary structure, part of the nascent polypeptide-associated complex (NAC), consisting of EGD2 and EGD1. NAC associates with ribosomes via EGD1.

It localises to the cytoplasm. The protein localises to the nucleus. Component of the nascent polypeptide-associated complex (NAC), a dynamic component of the ribosomal exit tunnel, protecting the emerging polypeptides from interaction with other cytoplasmic proteins to ensure appropriate nascent protein targeting. The NAC complex also promotes mitochondrial protein import by enhancing productive ribosome interactions with the outer mitochondrial membrane and blocks the inappropriate interaction of ribosomes translating non-secretory nascent polypeptides with translocation sites in the membrane of the endoplasmic reticulum. EGD2 may also be involved in transcription regulation. The sequence is that of Nascent polypeptide-associated complex subunit alpha (EGD2) from Pyricularia oryzae (strain 70-15 / ATCC MYA-4617 / FGSC 8958) (Rice blast fungus).